The sequence spans 726 residues: Dipeptidyl-peptidase 5 (726 aa).

An N-terminal signal peptide occupies residues 1 to 19; sequence MAAAKWLIASLAFASSGLA. N-linked (GlcNAc...) asparagine glycans are attached at residues N96 and N252. The disordered stretch occupies residues 269 to 291; it reads AEPINKRNGPRTPQGIEGASSSP. Residue S558 is the Charge relay system of the active site. N605 and N638 each carry an N-linked (GlcNAc...) asparagine glycan. Residues D641 and H673 each act as charge relay system in the active site. N699 is a glycosylation site (N-linked (GlcNAc...) asparagine).

Belongs to the peptidase S9C family.

It localises to the secreted. The chain is Dipeptidyl-peptidase 5 (DPPV) from Trichophyton schoenleinii.